Here is a 535-residue protein sequence, read N- to C-terminus: T-complex protein 1 subunit zeta 1 (535 aa).

This sequence belongs to the TCP-1 chaperonin family. In terms of assembly, heterooligomeric complex of about 850 to 900 kDa that forms two stacked rings, 12 to 16 nm in diameter.

Its subcellular location is the cytoplasm. Molecular chaperone; assists the folding of proteins upon ATP hydrolysis. Known to play a role, in vitro, in the folding of actin and tubulin. The polypeptide is T-complex protein 1 subunit zeta 1 (Arabidopsis thaliana (Mouse-ear cress)).